The primary structure comprises 298 residues: Glutamate/glycine mitochondrial carrier ymc1 (298 aa).

Solcar repeat units follow at residues 14–98 (TKDF…CKRF), 106–193 (VTMP…LVKN), and 206–294 (TPGW…VSQH). Helical transmembrane passes span 17–37 (FLAGVSGGVAQVLVGQPFDCV), 67–87 (LAAFYKGTVLPLLGIGFCVSI), 112–132 (YVSGAISGLANSFLVGPVEHV), 172–192 (TAAREAHGLGMYFLAYEALVK), 212–232 (CVFGAGAGYAMWLAAYPFDIV), and 266–287 (FYRGFVPVLVRAAPANAVTFYV).

This sequence belongs to the mitochondrial carrier (TC 2.A.29) family.

Its subcellular location is the mitochondrion inner membrane. In terms of biological role, acts as a glutamate and glycine mitochondrial transmembrane transporter. This Schizosaccharomyces pombe (strain 972 / ATCC 24843) (Fission yeast) protein is Glutamate/glycine mitochondrial carrier ymc1 (ymc1).